The following is a 605-amino-acid chain: Aspartate--tRNA(Asp/Asn) ligase (605 aa).

An L-aspartate-binding site is contributed by Glu183. Residues 207-210 (QLFK) are aspartate. Position 229 (Arg229) interacts with L-aspartate. ATP is bound by residues 229–231 (RDE) and Gln238. His457 is a binding site for L-aspartate. Glu497 provides a ligand contact to ATP. Arg504 provides a ligand contact to L-aspartate. Residue 549–552 (GLDR) participates in ATP binding.

The protein belongs to the class-II aminoacyl-tRNA synthetase family. Type 1 subfamily. In terms of assembly, homodimer.

Its subcellular location is the cytoplasm. It catalyses the reaction tRNA(Asx) + L-aspartate + ATP = L-aspartyl-tRNA(Asx) + AMP + diphosphate. Its function is as follows. Aspartyl-tRNA synthetase with relaxed tRNA specificity since it is able to aspartylate not only its cognate tRNA(Asp) but also tRNA(Asn). Reaction proceeds in two steps: L-aspartate is first activated by ATP to form Asp-AMP and then transferred to the acceptor end of tRNA(Asp/Asn). In Persephonella marina (strain DSM 14350 / EX-H1), this protein is Aspartate--tRNA(Asp/Asn) ligase.